Here is a 329-residue protein sequence, read N- to C-terminus: Malate dehydrogenase (329 aa).

12–18 (GAAGQIG) contributes to the NAD(+) binding site. Positions 93 and 99 each coordinate substrate. Residues N106, Q113, and 130 to 132 (TGN) contribute to the NAD(+) site. Residues N132 and R163 each contribute to the substrate site. H188 acts as the Proton acceptor in catalysis.

This sequence belongs to the LDH/MDH superfamily. MDH type 2 family.

The catalysed reaction is (S)-malate + NAD(+) = oxaloacetate + NADH + H(+). Its function is as follows. Catalyzes the reversible oxidation of malate to oxaloacetate. In Mycolicibacterium paratuberculosis (strain ATCC BAA-968 / K-10) (Mycobacterium paratuberculosis), this protein is Malate dehydrogenase.